Consider the following 202-residue polypeptide: Dephospho-CoA kinase (202 aa).

Positions valine 4 to asparagine 201 constitute a DPCK domain. Alanine 12–threonine 17 is a binding site for ATP.

The protein belongs to the CoaE family.

It is found in the cytoplasm. It carries out the reaction 3'-dephospho-CoA + ATP = ADP + CoA + H(+). Its pathway is cofactor biosynthesis; coenzyme A biosynthesis; CoA from (R)-pantothenate: step 5/5. Functionally, catalyzes the phosphorylation of the 3'-hydroxyl group of dephosphocoenzyme A to form coenzyme A. The sequence is that of Dephospho-CoA kinase from Vibrio cholerae serotype O1 (strain ATCC 39315 / El Tor Inaba N16961).